The chain runs to 338 residues: NADPH dehydrogenase (338 aa).

Residue Ser23–Cys26 participates in FMN binding. Tyr28 provides a ligand contact to substrate. FMN contacts are provided by Ala60 and Gln102. Substrate is bound at residue His163 to His166. FMN is bound by residues Arg214 and Ala306–Arg307.

It belongs to the NADH:flavin oxidoreductase/NADH oxidase family. NamA subfamily. Homotetramer. The cofactor is FMN.

It carries out the reaction A + NADPH + H(+) = AH2 + NADP(+). Its function is as follows. Catalyzes the reduction of the double bond of an array of alpha,beta-unsaturated aldehydes and ketones. It also reduces the nitro group of nitroester and nitroaromatic compounds. It could have a role in detoxification processes. The sequence is that of NADPH dehydrogenase from Halalkalibacterium halodurans (strain ATCC BAA-125 / DSM 18197 / FERM 7344 / JCM 9153 / C-125) (Bacillus halodurans).